A 294-amino-acid chain; its full sequence is NAD kinase (294 aa).

Catalysis depends on Asp-74, which acts as the Proton acceptor. NAD(+) contacts are provided by residues 74-75 (DG), 148-149 (NE), His-159, Arg-176, Asp-178, 189-194 (TAYSLS), and Gln-249.

It belongs to the NAD kinase family. It depends on a divalent metal cation as a cofactor.

It is found in the cytoplasm. It catalyses the reaction NAD(+) + ATP = ADP + NADP(+) + H(+). Involved in the regulation of the intracellular balance of NAD and NADP, and is a key enzyme in the biosynthesis of NADP. Catalyzes specifically the phosphorylation on 2'-hydroxyl of the adenosine moiety of NAD to yield NADP. This chain is NAD kinase, found in Vibrio campbellii (strain ATCC BAA-1116).